Reading from the N-terminus, the 101-residue chain is UPF0235 protein MmarC5_0538 (101 aa).

This sequence belongs to the UPF0235 family.

The polypeptide is UPF0235 protein MmarC5_0538 (Methanococcus maripaludis (strain C5 / ATCC BAA-1333)).